Reading from the N-terminus, the 172-residue chain is Adenine phosphoribosyltransferase (172 aa).

Belongs to the purine/pyrimidine phosphoribosyltransferase family. As to quaternary structure, homodimer.

The protein resides in the cytoplasm. The catalysed reaction is AMP + diphosphate = 5-phospho-alpha-D-ribose 1-diphosphate + adenine. It participates in purine metabolism; AMP biosynthesis via salvage pathway; AMP from adenine: step 1/1. Functionally, catalyzes a salvage reaction resulting in the formation of AMP, that is energically less costly than de novo synthesis. This chain is Adenine phosphoribosyltransferase, found in Prochlorococcus marinus (strain MIT 9303).